A 731-amino-acid chain; its full sequence is 1,4-alpha-glucan branching enzyme GlgB (731 aa).

The active-site Nucleophile is the Asp409. Glu462 acts as the Proton donor in catalysis.

Belongs to the glycosyl hydrolase 13 family. GlgB subfamily. Monomer.

It catalyses the reaction Transfers a segment of a (1-&gt;4)-alpha-D-glucan chain to a primary hydroxy group in a similar glucan chain.. It functions in the pathway glycan biosynthesis; glycogen biosynthesis. Functionally, catalyzes the formation of the alpha-1,6-glucosidic linkages in glycogen by scission of a 1,4-alpha-linked oligosaccharide from growing alpha-1,4-glucan chains and the subsequent attachment of the oligosaccharide to the alpha-1,6 position. This Dickeya chrysanthemi (Pectobacterium chrysanthemi) protein is 1,4-alpha-glucan branching enzyme GlgB (glgB).